The primary structure comprises 910 residues: Disease resistance protein RPH8A (910 aa).

Residues 15-57 are a coiled coil; the sequence is DLLSRESERLQGIDEQLDGLKRQLRSLQSLLKDADAKKHGSDR. The NB-ARC domain occupies 146–459; the sequence is RQRVQREIRQ…AEGIYDGSTI (314 aa). Residue 192-199 coordinates ATP; it reads GMGGIGKT.

It belongs to the disease resistance NB-LRR family. RPP8/HRT subfamily.

Functionally, disease resistance protein. Resistance proteins guard the plant against pathogens that contain an appropriate avirulence protein via an indirect interaction with this avirulence protein. That triggers a defense system including the hypersensitive response, which restricts the pathogen growth. In contrast to RPP8, it does not specifically recognize the Emco5 avirulence protein from Hyaloperonospora parasitica. The sequence is that of Disease resistance protein RPH8A (RPH8A) from Arabidopsis thaliana (Mouse-ear cress).